A 252-amino-acid chain; its full sequence is Nicotinamide/nicotinic acid mononucleotide adenylyltransferase 3 (252 aa).

Positions 14 and 15 each coordinate NAD(+). Residues His-22 and Lys-56 each coordinate ATP. NAD(+)-binding residues include Trp-90, Thr-93, Gly-135, and Asp-137. Residue Lys-140 coordinates ATP. Residues Leu-147, Trp-148, Arg-167, and Asn-198 each contribute to the NAD(+) site. An ATP-binding site is contributed by 203-206 (TYIR).

Belongs to the eukaryotic NMN adenylyltransferase family. In terms of assembly, homotetramer. Requires Mg(2+) as cofactor. In terms of tissue distribution, expressed in lung and spleen with lower levels in placenta and kidney.

It localises to the mitochondrion. The catalysed reaction is beta-nicotinamide D-ribonucleotide + ATP + H(+) = diphosphate + NAD(+). The enzyme catalyses nicotinate beta-D-ribonucleotide + ATP + H(+) = deamido-NAD(+) + diphosphate. The protein operates within cofactor biosynthesis; NAD(+) biosynthesis; NAD(+) from nicotinamide D-ribonucleotide: step 1/1. It participates in cofactor biosynthesis; NAD(+) biosynthesis; deamido-NAD(+) from nicotinate D-ribonucleotide: step 1/1. Activity is strongly inhibited by galotannin. Inhibited by P1-(adenosine-5')-P4-(nicotinic-acid-riboside-5')-tetraphosphate (Nap4AD). Catalyzes the formation of NAD(+) from nicotinamide mononucleotide (NMN) and ATP. Can also use the deamidated form; nicotinic acid mononucleotide (NaMN) as substrate with the same efficiency. Can use triazofurin monophosphate (TrMP) as substrate. Can also use GTP and ITP as nucleotide donors. Also catalyzes the reverse reaction, i.e. the pyrophosphorolytic cleavage of NAD(+). For the pyrophosphorolytic activity, can use NAD(+), NADH, NaAD, nicotinic acid adenine dinucleotide phosphate (NHD), nicotinamide guanine dinucleotide (NGD) as substrates. Fails to cleave phosphorylated dinucleotides NADP(+), NADPH and NaADP(+). Protects against axonal degeneration following injury. May be involved in the maintenance of axonal integrity. Also functions as a stress-response chaperone protein that prevents toxic aggregation of proteins; this function may be independent of its NAD(+) synthesis activity. This chain is Nicotinamide/nicotinic acid mononucleotide adenylyltransferase 3, found in Homo sapiens (Human).